The following is a 240-amino-acid chain: Short palate, lung and nasal epithelium carcinoma-associated protein 2B (240 aa).

Residues 1 to 19 (MVQLWKLVLLCGLLAGTSA) form the signal peptide. The cysteines at positions 163 and 206 are disulfide-linked.

It belongs to the BPI/LBP/Plunc superfamily. Plunc family. As to expression, parotid glands.

It localises to the secreted. The protein is Short palate, lung and nasal epithelium carcinoma-associated protein 2B (SPLUNC2B) of Bos taurus (Bovine).